Here is a 355-residue protein sequence, read N- to C-terminus: NAD-dependent protein deacylase sirtuin-6 (355 aa).

Residue Ser-2 is modified to N-acetylserine. At Ser-10 the chain carries Phosphoserine. Residues 27-272 form the Deacetylase sirtuin-type domain; that stretch reads PEELERKVWE…TRLMKHLGLE (246 aa). Position 33 is an N6-acetyllysine (Lys-33). 7 residues coordinate NAD(+): Ala-53, Thr-57, Phe-64, Arg-65, Trp-71, Gln-113, and His-133. His-133 (proton acceptor) is an active-site residue. Cys-141, Cys-144, and Cys-166 together coordinate Zn(2+). Lys-170 is covalently cross-linked (Glycyl lysine isopeptide (Lys-Gly) (interchain with G-Cter in ubiquitin)). Cys-177 is a binding site for Zn(2+). Gly-214, Ser-216, Asn-240, Gln-242, and Val-258 together coordinate NAD(+). The disordered stretch occupies residues 284–355; sequence RALPPLPRPP…KRVKAEAVPS (72 aa). A compositionally biased stretch (pro residues) spans 287 to 296; sequence PPLPRPPTPK. The residue at position 294 (Thr-294) is a Phosphothreonine. Phosphoserine occurs at positions 303 and 330.

This sequence belongs to the sirtuin family. Class IV subfamily. As to quaternary structure, homodimer; binds to nucleosomes and DNA ends as a homodimer. Interacts with RELA; interferes with RELA binding to target DNA. Interacts with SMARCA5; promoting recruitment of SMARCA5/SNF2H to double-strand breaks (DSBs) sites. Interacts with the mTORC2 complex; preventing the ability of SIRT6 to deacetylate FOXO1. Interacts with the CLOCK-BMAL1 complex; recruited by the CLOCK-BMAL1 complex to regulate expression of clock-controlled genes. Interacts with CSNK2A2; preventing CSNK2A2 localization to the nucleus. Acetylated at Lys-33. Deacetylation at Lys-33 by SIRT1 promotes homomultimerization and binding to double-strand breaks (DSBs) sites. Post-translationally, phosphorylation at Ser-10 by MAPK8/JNK1 in response to oxidative stress stimulates the mono-ADP-ribosyltransferase activity on PARP1, leading to PARP1 recruitment to double-strand breaks (DSBs). In terms of processing, monoubiquitinated at Lys-170 by STUB1/CHIP, preventing its degradation by the proteasome. Sumoylated, leading to specifically decrease ability to deacetylate histone H3 at 'Lys-56' (H3K56ac).

The protein resides in the nucleus. Its subcellular location is the chromosome. The protein localises to the telomere. It localises to the endoplasmic reticulum. It catalyses the reaction N(6)-acetyl-L-lysyl-[protein] + NAD(+) + H2O = 2''-O-acetyl-ADP-D-ribose + nicotinamide + L-lysyl-[protein]. The enzyme catalyses N(6)-tetradecanoyl-L-lysyl-[protein] + NAD(+) + H2O = 2''-O-tetradecanoyl-ADP-D-ribose + nicotinamide + L-lysyl-[protein]. It carries out the reaction N(6)-hexadecanoyl-L-lysyl-[protein] + NAD(+) + H2O = 2''-O-hexadecanoyl-ADP-D-ribose + nicotinamide + L-lysyl-[protein]. The catalysed reaction is L-lysyl-[protein] + NAD(+) = N(6)-(ADP-D-ribosyl)-L-lysyl-[protein] + nicotinamide + H(+). It catalyses the reaction L-arginyl-[protein] + NAD(+) = N(omega)-(ADP-D-ribosyl)-L-arginyl-[protein] + nicotinamide + H(+). With respect to regulation, compared to the defatty-acylase activity, the protein deacetylase activity is weak in vitro, and requires activation. The histone deacetylase activity is strongly activated upon binding to nucleosomes and chromatin in vivo. Two molecules of SIRT6 associate with the acidic patch of one nucleosome, while the C-terminal disordered region of SIRT6 associates with nucleosomal DNA, leading to efficient histone deacetylation. The protein-lysine deacetylase activity is also activated by long-chain free fatty-acids. In terms of biological role, NAD-dependent protein deacetylase, deacylase and mono-ADP-ribosyltransferase that plays an essential role in DNA damage repair, telomere maintenance, metabolic homeostasis, inflammation, tumorigenesis and aging. Displays protein-lysine deacetylase or defatty-acylase (demyristoylase and depalmitoylase) activity, depending on the context. Acts as a key histone deacetylase by catalyzing deacetylation of histone H3 at 'Lys-9', 'Lys-18' and 'Lys-56' (H3K9ac, H3K18ac and H3K56ac, respectively), suppressing target gene expression of several transcription factors, including NF-kappa-B. Acts as an inhibitor of transcription elongation by mediating deacetylation of H3K9ac and H3K56ac, preventing release of NELFE from chromatin and causing transcriptional pausing. Involved in DNA repair by promoting double-strand break (DSB) repair: acts as a DSB sensor by recognizing and binding DSB sites, leading to (1) recruitment of DNA repair proteins, such as SMARCA5/SNF2H, and (2) deacetylation of histone H3K9ac and H3K56ac. SIRT6 participation to DSB repair is probably involved in extension of life span. Also promotes DNA repair by deacetylating non-histone proteins, such as DDB2 and p53/TP53. Specifically deacetylates H3K18ac at pericentric heterochromatin, thereby maintaining pericentric heterochromatin silencing at centromeres and protecting against genomic instability and cellular senescence. Involved in telomere maintenance by catalyzing deacetylation of histone H3 in telomeric chromatin, regulating telomere position effect and telomere movement in response to DNA damage. Required for embryonic stem cell differentiation by mediating histone deacetylation of H3K9ac. Plays a major role in metabolism by regulating processes such as glycolysis, gluconeogenesis, insulin secretion and lipid metabolism. Inhibits glycolysis via histone deacetylase activity and by acting as a corepressor of the transcription factor HIF1A, thereby controlling the expression of multiple glycolytic genes. Has tumor suppressor activity by repressing glycolysis, thereby inhibiting the Warburg effect. Also regulates glycolysis and tumorigenesis by mediating deacetylation and nuclear export of non-histone proteins, such as isoform M2 of PKM (PKM2). Acts as a negative regulator of gluconeogenesis by mediating deacetylation of non-histone proteins, such as FOXO1 and KAT2A/GCN5. Promotes beta-oxidation of fatty acids during fasting by catalyzing deacetylation of NCOA2, inducing coactivation of PPARA. Acts as a regulator of lipid catabolism in brown adipocytes, both by catalyzing deacetylation of histones and non-histone proteins, such as FOXO1. Also acts as a regulator of circadian rhythms, both by regulating expression of clock-controlled genes involved in lipid and carbohydrate metabolism, and by catalyzing deacetylation of PER2. The defatty-acylase activity is specifically involved in regulation of protein secretion. Has high activity toward long-chain fatty acyl groups and mediates protein-lysine demyristoylation and depalmitoylation of target proteins, such as RRAS2 and TNF, thereby regulating their secretion. Also acts as a mono-ADP-ribosyltransferase by mediating mono-ADP-ribosylation of PARP1, TRIM28/KAP1 or SMARCC2/BAF170. Mono-ADP-ribosyltransferase activity is involved in DNA repair, cellular senescence, repression of LINE-1 retrotransposon elements and regulation of transcription. The sequence is that of NAD-dependent protein deacylase sirtuin-6 from Macaca fascicularis (Crab-eating macaque).